We begin with the raw amino-acid sequence, 75 residues long: Small ribosomal subunit protein bS18 (75 aa).

The protein belongs to the bacterial ribosomal protein bS18 family. As to quaternary structure, part of the 30S ribosomal subunit. Forms a tight heterodimer with protein bS6.

Its function is as follows. Binds as a heterodimer with protein bS6 to the central domain of the 16S rRNA, where it helps stabilize the platform of the 30S subunit. The protein is Small ribosomal subunit protein bS18 of Laribacter hongkongensis (strain HLHK9).